The chain runs to 378 residues: Deoxyguanosinetriphosphate triphosphohydrolase-like protein (378 aa).

The tract at residues 1-28 (MLAPFACQPGESRGRQKPESMSTFRSPF) is disordered. Residues 62 to 198 (RLTHSIEVAQ…AAIADDVAYS (137 aa)) enclose the HD domain.

The protein belongs to the dGTPase family. Type 2 subfamily.

In Cereibacter sphaeroides (strain ATCC 17029 / ATH 2.4.9) (Rhodobacter sphaeroides), this protein is Deoxyguanosinetriphosphate triphosphohydrolase-like protein.